The following is a 175-amino-acid chain: MVSPNAGSKVSIQSYKHNGQLHRTWENSVILKGTESVVIGANDRTKVIESDGRSWITREPAICYFHSKYWFNIIGMLRNDGIYYYCNISSPFVYDGEALKYIDYDLDVKVFPDMTFQLLDEDEYEEHRNLMNYPQVIDRILHQQLEILIRWIRQGKGPFSPDFVDNWYEMYLTYH.

Arg-23 functions as the Proton donor in the catalytic mechanism. Mg(2+) contacts are provided by Asn-87, Asp-103, Asp-105, Asp-107, Asp-120, and Glu-123.

It belongs to the Ntdp family. Mg(2+) serves as cofactor.

The enzyme catalyses a ribonucleoside 5'-triphosphate + H2O = a ribonucleoside 5'-diphosphate + phosphate + H(+). It carries out the reaction a ribonucleoside 5'-diphosphate + H2O = a ribonucleoside 5'-phosphate + phosphate + H(+). Functionally, has nucleoside phosphatase activity towards nucleoside triphosphates and nucleoside diphosphates. The chain is Nucleoside triphosphate/diphosphate phosphatase from Oceanobacillus iheyensis (strain DSM 14371 / CIP 107618 / JCM 11309 / KCTC 3954 / HTE831).